The chain runs to 162 residues: uncharacterized protein (162 aa).

In terms of domain architecture, HTH asnC-type spans 6–78 (LDDLDRNILR…ALIVLEVGKP (73 aa)). The segment at residues 25–44 (ISELSEQLKKPESTIHFRIK) is a DNA-binding region (H-T-H motif).

This is an uncharacterized protein from Pyrococcus furiosus (strain ATCC 43587 / DSM 3638 / JCM 8422 / Vc1).